The chain runs to 529 residues: MPSKGKDKKKGKSKGKDTKKLIKTDESVVDRAKANASLWEARLEVTELSRIKYRDTSRILAKSNEDLKKKQCKMEKDIMSVLSYLKKQDQEKDNMIEKLKQQLNETKEKAQEEKDKLEQKYTRQINELEGQFHQKAKEIGMIHTELKAVRQFQKRKIQVERELDDLKENLRNTERIHQETLRRLESRFFEEKHRLEQEAEKKIIMLAERAHHEAIVQLNDAGRNVFKENDYLQKALAYHLKETDALQKNSQKLQESHTLLLHQKEINDLLVKEKIMQLVQQRSQIQTLQKKVVNLETALSYMTKEFESEVLKLQQHAMIENQAGQVEIDKLQHLLQMKDREMNRVKKLAKNILDERTEVERFFLDALHQVKQQILISRKHYKQIAQAAFNLKMRAACTGRTEYPKIRTFDGREHSTNSVNQDLLEAEKWTHIEGNVDIGDLTWEQKEKVLRLLFAKMNGCPSRKYNQSSRPPVPDYVVSDSGETKEFGDESKLQDKIFITQQIAISDSSGEVVLPTIPKEPQESDTGTF.

Over residues 1–13 (MPSKGKDKKKGKS) the composition is skewed to basic residues. The tract at residues 1 to 22 (MPSKGKDKKKGKSKGKDTKKLI) is disordered. 2 coiled-coil regions span residues 85 to 201 (LKKQ…EAEK) and 271 to 361 (VKEK…EVER).

The protein belongs to the BBOF1 family. Interacts with MNS1 and ODF2.

The protein localises to the cytoplasm. Its subcellular location is the cytoskeleton. It localises to the cilium basal body. It is found in the flagellum axoneme. Functionally, plays an essential role in sperm motility and male fertility by stabilizing the sperm flagellar axonemal structure. May be required for the stability of ODF2 and MANS1 proteins. Dispensable for the assembly and function of motile cilia. The sequence is that of Basal body-orientation factor 1 from Homo sapiens (Human).